The following is a 324-amino-acid chain: MLNILMTHLINPLAYIVPVLLAVAFLTLIERKVLGYMQLRKGPNVVGPYGLLQPIADGVKLFIKEPVRPSTSSPFLFLAAPVLALTLAMTLWAPMPMPHPVTDLNLGILFILALSSLAVYSILGSGWALNSKYALIGALRAVAQTISYEVSLGLILLSVIIFSGGYTLQTFNITQESIWLLIPAWPLAAMWYISTLAETNRAPFDLTEGESELVSGFNVEYAGGPFALFFLAEYANILLMNTLSAVLFLGASHIPSVPELTTINLMTKAALLSIMFLWVRASYPRFRYDQLMHLVWKNFLPLTLAFVLWHTALPIALAGLPPQL.

Helical transmembrane passes span 9-29 (LINPLAYIVPVLLAVAFLTLI), 75-95 (FLFLAAPVLALTLAMTLWAPM), 106-126 (LGILFILALSSLAVYSILGSG), 146-166 (ISYEVSLGLILLSVIIFSGGY), 177-197 (SIWLLIPAWPLAAMWYISTLA), 228-248 (LFFLAEYANILLMNTLSAVLF), 259-279 (ELTTINLMTKAALLSIMFLWV), and 299-319 (FLPLTLAFVLWHTALPIALAG).

The protein belongs to the complex I subunit 1 family.

The protein resides in the mitochondrion inner membrane. The enzyme catalyses a ubiquinone + NADH + 5 H(+)(in) = a ubiquinol + NAD(+) + 4 H(+)(out). Functionally, core subunit of the mitochondrial membrane respiratory chain NADH dehydrogenase (Complex I) that is believed to belong to the minimal assembly required for catalysis. Complex I functions in the transfer of electrons from NADH to the respiratory chain. The immediate electron acceptor for the enzyme is believed to be ubiquinone. The polypeptide is NADH-ubiquinone oxidoreductase chain 1 (MT-ND1) (Cyprinus carpio (Common carp)).